Consider the following 508-residue polypeptide: Photosystem II CP47 reaction center protein (508 aa).

Transmembrane regions (helical) follow at residues 21–36 (AVHIMHTALVSGWAGS), 101–115 (IVFSGLCFLAAIWHW), 140–156 (GIHLFLAGVACFGFGAF), 203–218 (IAAGTLGILAGLFHLS), 237–252 (VLSSSIAAVFFAAFVV), and 457–472 (TFALLFFFGHIWHGAR).

It belongs to the PsbB/PsbC family. PsbB subfamily. PSII is composed of 1 copy each of membrane proteins PsbA, PsbB, PsbC, PsbD, PsbE, PsbF, PsbH, PsbI, PsbJ, PsbK, PsbL, PsbM, PsbT, PsbX, PsbY, PsbZ, Psb30/Ycf12, at least 3 peripheral proteins of the oxygen-evolving complex and a large number of cofactors. It forms dimeric complexes. Binds multiple chlorophylls. PSII binds additional chlorophylls, carotenoids and specific lipids. is required as a cofactor.

The protein resides in the plastid. The protein localises to the chloroplast thylakoid membrane. In terms of biological role, one of the components of the core complex of photosystem II (PSII). It binds chlorophyll and helps catalyze the primary light-induced photochemical processes of PSII. PSII is a light-driven water:plastoquinone oxidoreductase, using light energy to abstract electrons from H(2)O, generating O(2) and a proton gradient subsequently used for ATP formation. The polypeptide is Photosystem II CP47 reaction center protein (Hordeum vulgare (Barley)).